The sequence spans 390 residues: Leu/Ile/Val-binding protein homolog 6 (390 aa).

An N-terminal signal peptide occupies residues 1–21 (MKKIALTALAVFSLAASAAYA).

Belongs to the leucine-binding protein family.

Component of an amino-acid transport system. The sequence is that of Leu/Ile/Val-binding protein homolog 6 from Brucella abortus (strain 2308).